Consider the following 148-residue polypeptide: MYALRPTLRRSAAAALTHSKNHNYGMTPGPLALLPPIYLYRRLLRAHRKYLPREMRLLGDEYVKAEFRAHRSVDNPAHLIGFLTEWQLYAQKIEGNSWVGEKLDKGKVEKMSDEQIGQLYELMQAIQKRGTEGDLEDGDGGESGQKSQ.

Residues 1–12 constitute a mitochondrion transit peptide; the sequence is MYALRPTLRRSA. A disordered region spans residues 129-148; the sequence is RGTEGDLEDGDGGESGQKSQ.

It belongs to the complex I LYR family. SDHAF3 subfamily. Interacts with the iron-sulfur protein subunit within the SDH catalytic dimer.

The protein localises to the mitochondrion matrix. In terms of biological role, plays an essential role in the assembly of succinate dehydrogenase (SDH), an enzyme complex (also referred to as respiratory complex II) that is a component of both the tricarboxylic acid (TCA) cycle and the mitochondrial electron transport chain, and which couples the oxidation of succinate to fumarate with the reduction of ubiquinone (coenzyme Q) to ubiquinol. Promotes maturation of the iron-sulfur protein subunit of the SDH catalytic dimer, protecting it from the deleterious effects of oxidants. May act together with SDHAF1. The chain is Succinate dehydrogenase assembly factor 3, mitochondrial from Neurospora crassa (strain ATCC 24698 / 74-OR23-1A / CBS 708.71 / DSM 1257 / FGSC 987).